The sequence spans 317 residues: Transaldolase (317 aa).

Lysine 126 (schiff-base intermediate with substrate) is an active-site residue.

Belongs to the transaldolase family. Type 1 subfamily. As to quaternary structure, homodimer.

It is found in the cytoplasm. It catalyses the reaction D-sedoheptulose 7-phosphate + D-glyceraldehyde 3-phosphate = D-erythrose 4-phosphate + beta-D-fructose 6-phosphate. It participates in carbohydrate degradation; pentose phosphate pathway; D-glyceraldehyde 3-phosphate and beta-D-fructose 6-phosphate from D-ribose 5-phosphate and D-xylulose 5-phosphate (non-oxidative stage): step 2/3. Functionally, transaldolase is important for the balance of metabolites in the pentose-phosphate pathway. The protein is Transaldolase of Paraburkholderia phytofirmans (strain DSM 17436 / LMG 22146 / PsJN) (Burkholderia phytofirmans).